A 243-amino-acid chain; its full sequence is 1-(5-phosphoribosyl)-5-[(5-phosphoribosylamino)methylideneamino] imidazole-4-carboxamide isomerase (243 aa).

Residue aspartate 10 is the Proton acceptor of the active site. Aspartate 129 acts as the Proton donor in catalysis.

The protein belongs to the HisA/HisF family.

The protein localises to the cytoplasm. The catalysed reaction is 1-(5-phospho-beta-D-ribosyl)-5-[(5-phospho-beta-D-ribosylamino)methylideneamino]imidazole-4-carboxamide = 5-[(5-phospho-1-deoxy-D-ribulos-1-ylimino)methylamino]-1-(5-phospho-beta-D-ribosyl)imidazole-4-carboxamide. The protein operates within amino-acid biosynthesis; L-histidine biosynthesis; L-histidine from 5-phospho-alpha-D-ribose 1-diphosphate: step 4/9. In Nocardia farcinica (strain IFM 10152), this protein is 1-(5-phosphoribosyl)-5-[(5-phosphoribosylamino)methylideneamino] imidazole-4-carboxamide isomerase.